Reading from the N-terminus, the 273-residue chain is Dermonecrotic toxin LdSicTox-alphaIB3aiv (273 aa).

The active site involves His-5. Positions 25 and 27 each coordinate Mg(2+). His-41 serves as the catalytic Nucleophile. Cystine bridges form between Cys-45-Cys-51 and Cys-47-Cys-190. Asp-85 lines the Mg(2+) pocket.

Belongs to the arthropod phospholipase D family. Class II subfamily. Requires Mg(2+) as cofactor. Expressed by the venom gland.

It is found in the secreted. The catalysed reaction is an N-(acyl)-sphingosylphosphocholine = an N-(acyl)-sphingosyl-1,3-cyclic phosphate + choline. The enzyme catalyses an N-(acyl)-sphingosylphosphoethanolamine = an N-(acyl)-sphingosyl-1,3-cyclic phosphate + ethanolamine. It catalyses the reaction a 1-acyl-sn-glycero-3-phosphocholine = a 1-acyl-sn-glycero-2,3-cyclic phosphate + choline. It carries out the reaction a 1-acyl-sn-glycero-3-phosphoethanolamine = a 1-acyl-sn-glycero-2,3-cyclic phosphate + ethanolamine. Its function is as follows. Dermonecrotic toxins cleave the phosphodiester linkage between the phosphate and headgroup of certain phospholipids (sphingolipid and lysolipid substrates), forming an alcohol (often choline) and a cyclic phosphate. This toxin acts on sphingomyelin (SM). It may also act on ceramide phosphoethanolamine (CPE), lysophosphatidylcholine (LPC) and lysophosphatidylethanolamine (LPE), but not on lysophosphatidylserine (LPS), and lysophosphatidylglycerol (LPG). It acts by transphosphatidylation, releasing exclusively cyclic phosphate products as second products. Induces dermonecrosis, hemolysis, increased vascular permeability, edema, inflammatory response, and platelet aggregation. In Loxosceles deserta (Desert recluse spider), this protein is Dermonecrotic toxin LdSicTox-alphaIB3aiv.